A 214-amino-acid polypeptide reads, in one-letter code: CASP-like protein 0U1 (214 aa).

The Cytoplasmic segment spans residues 1–82; it reads MATSEAPLLK…GFTSFYQFKG (82 aa). A helical membrane pass occupies residues 83–103; sequence VVGVYAAFWVYTVLLIGLYLF. At 104-112 the chain is on the extracellular side; it reads SRGPPPGTE. A helical membrane pass occupies residues 113–133; sequence FVVHALFTLCMIAFVSLSVIS. Topologically, residues 134–153 are cytoplasmic; sequence CTSTVIESDYSVCKNAAYAK. The helical transmembrane segment at 154–174 threads the bilayer; sequence ASLVFAALVVVLNCATCAFVF. The Extracellular segment spans residues 175–214; the sequence is KQWRSLQFVGMPENFRPFGRHRHKHGHHAGDADDAIPTHP. The segment at 194–214 is disordered; the sequence is RHRHKHGHHAGDADDAIPTHP.

This sequence belongs to the Casparian strip membrane proteins (CASP) family. As to quaternary structure, homodimer and heterodimers.

The protein localises to the cell membrane. The polypeptide is CASP-like protein 0U1 (Ostreococcus tauri).